The chain runs to 356 residues: Protein-L-isoaspartate O-methyltransferase domain-containing protein 1 (356 aa).

A lipid anchor (N-myristoyl glycine) is attached at Gly2. Residue Ser64 is part of the active site. 3 adoMet binding motif regions span residues 85 to 94 (LNLGSGTGYL), 160 to 164 (YDRIY), and 181 to 191 (LKVGGILVMPI). The interval 240-250 (VRNLQDLARIY) is BC-box. Residues 299–331 (PLDSEEDEKMEEDKEEEEKEPGEALKPEEPPQN) form a disordered region. Positions 301–318 (DSEEDEKMEEDKEEEEKE) are enriched in acidic residues. The segment covering 319–331 (PGEALKPEEPPQN) has biased composition (basic and acidic residues). A CUL-box region spans residues 340–343 (LPLP).

This sequence belongs to the methyltransferase superfamily. L-isoaspartyl/D-aspartyl protein methyltransferase family. Component of the probable ECS(PCMTD1) E3 ubiquitin-protein ligase complex, at least composed of CUL5, ELOB, ELOC, RBX2 and PCMTD1. Interacts (via the BC-box) with ELOB and ELOC; the interaction is direct and stabilizes PCMTD1.

Its subcellular location is the cytoplasm. The protein resides in the membrane. Substrate recognition component of an ECS (Elongin BC-CUL5-SOCS-box protein) E3 ubiquitin ligase complex which mediates the ubiquitination and subsequent proteasomal degradation of target proteins. Specifically binds to the methyltransferase cofactor S-adenosylmethionine (AdoMet) via the N-terminal AdoMet binding motif, but does not display methyltransferase activity. May provide an alternate maintenance pathway for modified proteins by acting as a damage-specific E3 ubiquitin ligase adaptor protein. The protein is Protein-L-isoaspartate O-methyltransferase domain-containing protein 1 (PCMTD1) of Bos taurus (Bovine).